Here is a 275-residue protein sequence, read N- to C-terminus: 3-methyl-2-oxobutanoate hydroxymethyltransferase (275 aa).

Mg(2+) contacts are provided by D44 and D83. Residues 44 to 45 (DS), D83, and K113 each bind 3-methyl-2-oxobutanoate. E115 contacts Mg(2+). Residue E182 is the Proton acceptor of the active site.

The protein belongs to the PanB family. As to quaternary structure, homodecamer; pentamer of dimers. Mg(2+) is required as a cofactor.

Its subcellular location is the cytoplasm. It catalyses the reaction 3-methyl-2-oxobutanoate + (6R)-5,10-methylene-5,6,7,8-tetrahydrofolate + H2O = 2-dehydropantoate + (6S)-5,6,7,8-tetrahydrofolate. It functions in the pathway cofactor biosynthesis; (R)-pantothenate biosynthesis; (R)-pantoate from 3-methyl-2-oxobutanoate: step 1/2. Catalyzes the reversible reaction in which hydroxymethyl group from 5,10-methylenetetrahydrofolate is transferred onto alpha-ketoisovalerate to form ketopantoate. This chain is 3-methyl-2-oxobutanoate hydroxymethyltransferase, found in Clostridium botulinum (strain Alaska E43 / Type E3).